Reading from the N-terminus, the 548-residue chain is 5-epi-aristolochene synthase 3 (548 aa).

Residues Asp301, Asp305, Asp444, Thr448, and Glu452 each contribute to the Mg(2+) site. Residues 301–305 (DDTFD) carry the DDXXD motif motif.

Belongs to the terpene synthase family. Monomer. It depends on Mg(2+) as a cofactor. Expressed in roots, but not in shoots.

The protein localises to the cytoplasm. The catalysed reaction is (2E,6E)-farnesyl diphosphate = (+)-5-epi-aristolochene + diphosphate. Its pathway is secondary metabolite biosynthesis; terpenoid biosynthesis. Catalyzes the cyclization of trans,trans-farnesyl diphosphate (FPP) to the bicyclic intermediate 5-epi-aristolochene, initial step in the conversion of FPP to the sesquiterpenoid antifungal phytoalexin capsidiol. Produces germacrene A as an enzyme-bound intermediate that is not released by the enzyme, but is further cyclized to produce the bicyclic 5-epi-aristolochene. The sequence is that of 5-epi-aristolochene synthase 3 from Nicotiana attenuata (Coyote tobacco).